Consider the following 65-residue polypeptide: Small vasohibin-binding protein (65 aa).

The span at 1-22 (MEPACRKDKQKQQTPTRGDRTK) shows a compositional bias: basic and acidic residues. A disordered region spans residues 1–30 (MEPACRKDKQKQQTPTRGDRTKQKTAQQEL). Residues 31 to 51 (KQRQRAEIYALNKVMTELEQQ) adopt a coiled-coil conformation.

This sequence belongs to the SVBP family.

It is found in the cytoplasm. It localises to the secreted. Its subcellular location is the cytoskeleton. Its function is as follows. Enhances the tyrosine carboxypeptidase activity of vash1 and vash2, thereby promoting the removal of the C-terminal tyrosine residue of alpha-tubulin. Also required to enhance the solubility and secretion of vash1 and vash2. May play a role in axon and excitatory synapse formation. The polypeptide is Small vasohibin-binding protein (Danio rerio (Zebrafish)).